The chain runs to 423 residues: Gamma-glutamyl phosphate reductase (423 aa).

It belongs to the gamma-glutamyl phosphate reductase family.

It localises to the cytoplasm. It carries out the reaction L-glutamate 5-semialdehyde + phosphate + NADP(+) = L-glutamyl 5-phosphate + NADPH + H(+). The protein operates within amino-acid biosynthesis; L-proline biosynthesis; L-glutamate 5-semialdehyde from L-glutamate: step 2/2. In terms of biological role, catalyzes the NADPH-dependent reduction of L-glutamate 5-phosphate into L-glutamate 5-semialdehyde and phosphate. The product spontaneously undergoes cyclization to form 1-pyrroline-5-carboxylate. The protein is Gamma-glutamyl phosphate reductase of Burkholderia vietnamiensis (strain G4 / LMG 22486) (Burkholderia cepacia (strain R1808)).